Here is a 266-residue protein sequence, read N- to C-terminus: Putative carbamate hydrolase RutD (266 aa).

Belongs to the AB hydrolase superfamily. Hydrolase RutD family.

It catalyses the reaction carbamate + 2 H(+) = NH4(+) + CO2. Its function is as follows. Involved in pyrimidine catabolism. May facilitate the hydrolysis of carbamate, a reaction that can also occur spontaneously. The protein is Putative carbamate hydrolase RutD of Acinetobacter baylyi (strain ATCC 33305 / BD413 / ADP1).